The primary structure comprises 102 residues: Small ribosomal subunit protein uS10 (102 aa).

This sequence belongs to the universal ribosomal protein uS10 family. In terms of assembly, part of the 30S ribosomal subunit.

In terms of biological role, involved in the binding of tRNA to the ribosomes. The polypeptide is Small ribosomal subunit protein uS10 (Thermotoga neapolitana (strain ATCC 49049 / DSM 4359 / NBRC 107923 / NS-E)).